The primary structure comprises 874 residues: Alanine--tRNA ligase (874 aa).

4 residues coordinate Zn(2+): His-562, His-566, Cys-664, and His-668.

The protein belongs to the class-II aminoacyl-tRNA synthetase family. The cofactor is Zn(2+).

The protein localises to the cytoplasm. It carries out the reaction tRNA(Ala) + L-alanine + ATP = L-alanyl-tRNA(Ala) + AMP + diphosphate. Catalyzes the attachment of alanine to tRNA(Ala) in a two-step reaction: alanine is first activated by ATP to form Ala-AMP and then transferred to the acceptor end of tRNA(Ala). Also edits incorrectly charged Ser-tRNA(Ala) and Gly-tRNA(Ala) via its editing domain. This Shewanella halifaxensis (strain HAW-EB4) protein is Alanine--tRNA ligase.